A 200-amino-acid chain; its full sequence is Recombination protein RecR (200 aa).

Residues 59–74 (CDICGNVCESSPCPVC) form a C4-type zinc finger. One can recognise a Toprim domain in the interval 82–177 (SVICVVEEPK…KVTRLASGLP (96 aa)).

The protein belongs to the RecR family.

Its function is as follows. May play a role in DNA repair. It seems to be involved in an RecBC-independent recombinational process of DNA repair. It may act with RecF and RecO. This Bifidobacterium longum subsp. infantis (strain ATCC 15697 / DSM 20088 / JCM 1222 / NCTC 11817 / S12) protein is Recombination protein RecR.